The sequence spans 132 residues: Small ribosomal subunit protein uS11 (132 aa).

The protein belongs to the universal ribosomal protein uS11 family. Part of the 30S ribosomal subunit. Interacts with proteins S7 and S18. Binds to IF-3.

Functionally, located on the platform of the 30S subunit, it bridges several disparate RNA helices of the 16S rRNA. Forms part of the Shine-Dalgarno cleft in the 70S ribosome. In Cupriavidus pinatubonensis (strain JMP 134 / LMG 1197) (Cupriavidus necator (strain JMP 134)), this protein is Small ribosomal subunit protein uS11.